We begin with the raw amino-acid sequence, 387 residues long: Phosphoglycerate kinase (387 aa).

Substrate is bound by residues 21-23, arginine 36, 59-62, arginine 114, and arginine 147; these read DLN and HLGR. Residues lysine 198, glutamate 314, and 340–343 contribute to the ATP site; that span reads GGDT.

This sequence belongs to the phosphoglycerate kinase family. As to quaternary structure, monomer.

It is found in the cytoplasm. The catalysed reaction is (2R)-3-phosphoglycerate + ATP = (2R)-3-phospho-glyceroyl phosphate + ADP. Its pathway is carbohydrate degradation; glycolysis; pyruvate from D-glyceraldehyde 3-phosphate: step 2/5. This Erwinia tasmaniensis (strain DSM 17950 / CFBP 7177 / CIP 109463 / NCPPB 4357 / Et1/99) protein is Phosphoglycerate kinase.